Consider the following 378-residue polypeptide: Carbamoyl phosphate synthase small chain (378 aa).

The interval 1–189 (MTKPAILALA…DSHPEIPAGE (189 aa)) is CPSase. L-glutamine is bound by residues serine 47, glycine 241, and glycine 243. The Glutamine amidotransferase type-1 domain maps to 193–378 (HVVAYDYGVK…RFISAMAERR (186 aa)). Cysteine 269 serves as the catalytic Nucleophile. 5 residues coordinate L-glutamine: leucine 270, glutamine 273, asparagine 311, glycine 313, and phenylalanine 314. Catalysis depends on residues histidine 353 and glutamate 355.

This sequence belongs to the CarA family. Composed of two chains; the small (or glutamine) chain promotes the hydrolysis of glutamine to ammonia, which is used by the large (or ammonia) chain to synthesize carbamoyl phosphate. Tetramer of heterodimers (alpha,beta)4.

It catalyses the reaction hydrogencarbonate + L-glutamine + 2 ATP + H2O = carbamoyl phosphate + L-glutamate + 2 ADP + phosphate + 2 H(+). The catalysed reaction is L-glutamine + H2O = L-glutamate + NH4(+). Its pathway is amino-acid biosynthesis; L-arginine biosynthesis; carbamoyl phosphate from bicarbonate: step 1/1. The protein operates within pyrimidine metabolism; UMP biosynthesis via de novo pathway; (S)-dihydroorotate from bicarbonate: step 1/3. Functionally, small subunit of the glutamine-dependent carbamoyl phosphate synthetase (CPSase). CPSase catalyzes the formation of carbamoyl phosphate from the ammonia moiety of glutamine, carbonate, and phosphate donated by ATP, constituting the first step of 2 biosynthetic pathways, one leading to arginine and/or urea and the other to pyrimidine nucleotides. The small subunit (glutamine amidotransferase) binds and cleaves glutamine to supply the large subunit with the substrate ammonia. This is Carbamoyl phosphate synthase small chain from Pseudomonas aeruginosa (strain ATCC 15692 / DSM 22644 / CIP 104116 / JCM 14847 / LMG 12228 / 1C / PRS 101 / PAO1).